Reading from the N-terminus, the 837-residue chain is Tuftelin-interacting protein 11 (837 aa).

Composition is skewed to basic and acidic residues over residues 1–13 and 53–64; these read MSLS…GEGR and VWAERDSDDERP. 3 disordered regions span residues 1 to 21, 53 to 72, and 85 to 133; these read MSLS…DDER, VWAE…KRAR, and LKKG…KGFA. The segment at 1-50 is required for interaction with DHX15; the sequence is MSLSHLYRDGEGRIDDDDDERENFEITDWDLQNEFNPNRQRHWQTKEEAT. Serine 2, serine 59, and serine 98 each carry phosphoserine. Acidic residues predominate over residues 91–102; it reads EEAELEDSDDEE. The segment covering 103-116 has biased composition (basic and acidic residues); it reads KPVKQDDFPKDFGP. The residue at position 144 (serine 144) is a Phosphoserine. The G-patch domain maps to 149 to 195; that stretch reads TKGIGQKLLQKMGYVPGRGLGKNAQGIINPIEAKQRKGKGAVGAYGS. The segment at 179–236 is disordered; that stretch reads IEAKQRKGKGAVGAYGSERTTQSMQDFPVVDSEEEAEEEFQKELSQWRKDPSGSKKKP. Serine 210 is subject to Phosphoserine. Positions 217–231 are enriched in basic and acidic residues; the sequence is EFQKELSQWRKDPSG. Positions 700–705 match the Nuclear localization signal motif; sequence VKDKFN. Residues 710–734 are required for nuclear speckle localization; the sequence is IMNRAVSSNVGAYMQPGARENIAYL.

Belongs to the TFP11/STIP family. Identified in the spliceosome C complex. Found in the Intron Large (IL) complex, a post-mRNA release spliceosomal complex containing the excised intron, U2, U5 and U6 snRNPs, and splicing factors. Interacts with TUFT1. Interacts with DHX15; indicative for a recruitment of DHX15 to the IL complex. Interacts with GCFC2.

Its subcellular location is the cytoplasm. The protein resides in the nucleus. In terms of biological role, involved in pre-mRNA splicing, specifically in spliceosome disassembly during late-stage splicing events. Intron turnover seems to proceed through reactions in two lariat-intron associated complexes termed Intron Large (IL) and Intron Small (IS). In cooperation with DHX15 seems to mediate the transition of the U2, U5 and U6 snRNP-containing IL complex to the snRNP-free IS complex leading to efficient debranching and turnover of excised introns. May play a role in the differentiation of ameloblasts and odontoblasts or in the forming of the enamel extracellular matrix. This chain is Tuftelin-interacting protein 11 (TFIP11), found in Pan troglodytes (Chimpanzee).